The sequence spans 236 residues: Uridylate kinase (236 aa).

10–13 contributes to the ATP binding site; it reads KLSG. The interval 18 to 23 is involved in allosteric activation by GTP; that stretch reads GEDGYG. Gly52 provides a ligand contact to UMP. ATP contacts are provided by Gly53 and Arg57. UMP is bound by residues Asp72 and 133-140; that span reads TGNPYFTT. ATP-binding residues include Thr160, Tyr166, and Asp169.

This sequence belongs to the UMP kinase family. As to quaternary structure, homohexamer.

It is found in the cytoplasm. It catalyses the reaction UMP + ATP = UDP + ADP. It participates in pyrimidine metabolism; CTP biosynthesis via de novo pathway; UDP from UMP (UMPK route): step 1/1. With respect to regulation, allosterically activated by GTP. Inhibited by UTP. Functionally, catalyzes the reversible phosphorylation of UMP to UDP. The sequence is that of Uridylate kinase from Chlorobium phaeobacteroides (strain DSM 266 / SMG 266 / 2430).